The following is a 160-amino-acid chain: uncharacterized protein (160 aa).

The region spanning 2-140 is the N-acetyltransferase domain; that stretch reads MIIIPNNEIA…KARRLKPEIP (139 aa).

This is an uncharacterized protein from Bacillus subtilis (strain 168).